The primary structure comprises 177 residues: Large ribosomal subunit protein uL6 (177 aa).

It belongs to the universal ribosomal protein uL6 family. In terms of assembly, part of the 50S ribosomal subunit.

Its function is as follows. This protein binds to the 23S rRNA, and is important in its secondary structure. It is located near the subunit interface in the base of the L7/L12 stalk, and near the tRNA binding site of the peptidyltransferase center. The polypeptide is Large ribosomal subunit protein uL6 (Rhizobium leguminosarum bv. trifolii (strain WSM2304)).